The sequence spans 201 residues: Probable nicotinate-nucleotide adenylyltransferase (201 aa).

A disordered region spans residues 182–201; that stretch reads GPESSQSATSIRERGGWSLR. Residues 192–201 show a composition bias toward basic and acidic residues; sequence IRERGGWSLR.

This sequence belongs to the NadD family.

It carries out the reaction nicotinate beta-D-ribonucleotide + ATP + H(+) = deamido-NAD(+) + diphosphate. The protein operates within cofactor biosynthesis; NAD(+) biosynthesis; deamido-NAD(+) from nicotinate D-ribonucleotide: step 1/1. In terms of biological role, catalyzes the reversible adenylation of nicotinate mononucleotide (NaMN) to nicotinic acid adenine dinucleotide (NaAD). This Parvibaculum lavamentivorans (strain DS-1 / DSM 13023 / NCIMB 13966) protein is Probable nicotinate-nucleotide adenylyltransferase.